Consider the following 307-residue polypeptide: MTKAGSKGGNLRDKLDGNELDLSLSDLNEVPVKELAALPKATVLDLSCNKLSTLPSDFCGLTHLVKLDLSKNKLQQLPADFGRLVNLQHLDLLNNRLVTLPVSFAQLKNLKWLDLKDNPLDPVLAKVAGDCLDEKQCKQCANKVLQHMKAVQADQERERQRRLEVEREAEKKREAKQQAKEAKERELRKREKAEEKERRRKEYDAQKASKREQEKKPKKEANQAPKSKSGSRPRKPPPRKHTRSWAVLKVLLLLLLLCVAGGLVVCRVTGLHQQPLCTSVNTIYDNAVQGLRHHEILQWVLQTDSQQ.

At Met-1 the chain carries N-acetylmethionine. N-acetylthreonine; in Leucine-rich repeat-containing protein 59, N-terminally processed is present on Thr-2. Residues 2 to 244 lie on the Cytoplasmic side of the membrane; the sequence is TKAGSKGGNL…KPPPRKHTRS (243 aa). LRR repeat units follow at residues 10 to 31, 40 to 62, 63 to 84, 86 to 107, and 109 to 128; these read NLRD…NEVP, KATV…CGLT, HLVK…FGRL, NLQH…FAQL, and NLKW…AKVA. Phosphoserine occurs at positions 23 and 25. Lys-73 carries the N6-succinyllysine modification. Position 135 is an N6-acetyllysine (Lys-135). Residues 148 to 216 are a coiled coil; sequence MKAVQADQER…KASKREQEKK (69 aa). Positions 150–241 are disordered; the sequence is AVQADQERER…RPRKPPPRKH (92 aa). The span at 154 to 221 shows a compositional bias: basic and acidic residues; that stretch reads DQERERQRRL…EQEKKPKKEA (68 aa). Basic residues predominate over residues 229-241; sequence SGSRPRKPPPRKH. A helical transmembrane segment spans residues 245-265; the sequence is WAVLKVLLLLLLLCVAGGLVV. Residues 266–307 are Lumenal-facing; the sequence is CRVTGLHQQPLCTSVNTIYDNAVQGLRHHEILQWVLQTDSQQ.

In terms of assembly, can form homodimers. Interacts with SGO1. Interacts with FGF1.

It localises to the microsome membrane. It is found in the endoplasmic reticulum membrane. Its subcellular location is the nucleus envelope. Functionally, required for nuclear import of FGF1, but not that of FGF2. Might regulate nuclear import of exogenous FGF1 by facilitating interaction with the nuclear import machinery and by transporting cytosolic FGF1 to, and possibly through, the nuclear pores. This Mus musculus (Mouse) protein is Leucine-rich repeat-containing protein 59 (Lrrc59).